Here is a 396-residue protein sequence, read N- to C-terminus: Tryptophan synthase beta chain (396 aa).

Position 88 is an N6-(pyridoxal phosphate)lysine (K88).

Belongs to the TrpB family. Tetramer of two alpha and two beta chains. Requires pyridoxal 5'-phosphate as cofactor.

The enzyme catalyses (1S,2R)-1-C-(indol-3-yl)glycerol 3-phosphate + L-serine = D-glyceraldehyde 3-phosphate + L-tryptophan + H2O. It participates in amino-acid biosynthesis; L-tryptophan biosynthesis; L-tryptophan from chorismate: step 5/5. Its function is as follows. The beta subunit is responsible for the synthesis of L-tryptophan from indole and L-serine. The chain is Tryptophan synthase beta chain from Shewanella sp. (strain ANA-3).